Reading from the N-terminus, the 457-residue chain is tRNA-2-methylthio-N(6)-dimethylallyladenosine synthase (457 aa).

The 116-residue stretch at 19–134 (RKLFIETYGC…LPNLVGAVEH (116 aa)) folds into the MTTase N-terminal domain. Positions 28, 64, 98, 172, 176, and 179 each coordinate [4Fe-4S] cluster. A Radical SAM core domain is found at 158–390 (PGVHISGFVS…IDLQNKLSEE (233 aa)). One can recognise a TRAM domain in the interval 393–456 (LRDIGKTFEV…SATLFGEPVE (64 aa)).

It belongs to the methylthiotransferase family. MiaB subfamily. As to quaternary structure, monomer. [4Fe-4S] cluster serves as cofactor.

The protein localises to the cytoplasm. It catalyses the reaction N(6)-dimethylallyladenosine(37) in tRNA + (sulfur carrier)-SH + AH2 + 2 S-adenosyl-L-methionine = 2-methylsulfanyl-N(6)-dimethylallyladenosine(37) in tRNA + (sulfur carrier)-H + 5'-deoxyadenosine + L-methionine + A + S-adenosyl-L-homocysteine + 2 H(+). Catalyzes the methylthiolation of N6-(dimethylallyl)adenosine (i(6)A), leading to the formation of 2-methylthio-N6-(dimethylallyl)adenosine (ms(2)i(6)A) at position 37 in tRNAs that read codons beginning with uridine. The chain is tRNA-2-methylthio-N(6)-dimethylallyladenosine synthase from Parabacteroides distasonis (strain ATCC 8503 / DSM 20701 / CIP 104284 / JCM 5825 / NCTC 11152).